Consider the following 115-residue polypeptide: Large ribosomal subunit protein bL19 (115 aa).

Belongs to the bacterial ribosomal protein bL19 family.

In terms of biological role, this protein is located at the 30S-50S ribosomal subunit interface and may play a role in the structure and function of the aminoacyl-tRNA binding site. The sequence is that of Large ribosomal subunit protein bL19 from Streptococcus thermophilus (strain CNRZ 1066).